Reading from the N-terminus, the 274-residue chain is Envelope glycoprotein L (274 aa).

The N-terminal stretch at 1-21 is a signal peptide; sequence MMPLLLLILLSTRNLLGAAQS. The region spanning 51-251 is the gL betaherpesvirus-type domain; the sequence is VEHKCREALA…RSYRDRFPAV (201 aa). A disulfide bond links Cys156 and Cys161.

Belongs to the herpesviridae glycoprotein L (gL) family. Betaherpesvirinae gL subfamily. Interacts with glycoprotein H (gH); this interaction is necessary for the correct processing and cell surface expression of gH.

It localises to the virion membrane. Its subcellular location is the host cell membrane. The protein localises to the host Golgi apparatus. It is found in the host trans-Golgi network. In terms of biological role, the heterodimer glycoprotein H-glycoprotein L is required for the fusion of viral and plasma membranes leading to virus entry into the host cell. Acts as a functional inhibitor of gH and maintains gH in an inhibited form. Upon binding to host integrins, gL dissociates from gH leading to activation of the viral fusion glycoproteins gB and gH. The polypeptide is Envelope glycoprotein L (Murid herpesvirus 1 (strain Smith) (MuHV-1)).